We begin with the raw amino-acid sequence, 218 residues long: MAQTAMSETYDFLFKFLVIGNAGTGKSCLLHQFIEKKFKDDSNHTIGVEFGSKIINVGGKYVKLQIWDTAGQERFRSVTRSYYRGAAGALLVYDITSRETYNALTNWLTDARMLASQNIVIILCGNKKDLDADREVTFLEASRFAQENELMFLETSALTGENVEEAFMQCARKILNKIESGELDPERMGSGIQYGDAALRQLRSPRRTQAPSAQECGC.

GTP is bound by residues glycine 23, threonine 24, glycine 25, lysine 26, serine 27, cysteine 28, serine 42, histidine 44, and threonine 45. Residue serine 27 coordinates Mg(2+). The Switch 1 motif lies at 44 to 49 (HTIGVE). Residues threonine 45 and aspartate 68 each coordinate Mg(2+). A Switch 2 motif is present at residues 70–79 (AGQERFRSVT). Glycine 71 lines the GTP pocket. Glutamine 72 carries the 5-glutamyl serotonin modification. The GTP site is built by asparagine 126, lysine 127, aspartate 129, alanine 157, and leucine 158. Serine 190 bears the Phosphoserine mark. Residue serine 204 is modified to Phosphoserine; by CDK1. S-geranylgeranyl cysteine attachment occurs at residues cysteine 216 and cysteine 218. Cysteine methyl ester is present on cysteine 218.

This sequence belongs to the small GTPase superfamily. Rab family. Interacts with SGSM1, SGSM2 and SGSM3. Interacts with RAB11FIP1, RABEP1, ZFYVE20 and RUFY1. Interacts (membrane-bound form) with NDRG1; the interaction involves NDRG1 in vesicular recycling of E-cadherin. Interacts (in GTP-bound form) with GRIPAP1 (via N-terminus). Interacts with RABEP1 and RBSN. Does not interact with HPS4. Interacts with RABEP2; this interaction may mediate VEGFR2 cell surface expression. It depends on Mg(2+) as a cofactor. In terms of processing, serotonylation of Gln-72 by TGM2 during activation and aggregation of platelets leads to constitutive activation of GTPase activity. Post-translationally, phosphorylated by CDK1 kinase during mitosis.

Its subcellular location is the membrane. The protein resides in the cytoplasm. It localises to the early endosome membrane. The protein localises to the recycling endosome membrane. The enzyme catalyses GTP + H2O = GDP + phosphate + H(+). With respect to regulation, regulated by guanine nucleotide exchange factors (GEFs) which promote the exchange of bound GDP for free GTP. Regulated by GTPase activating proteins (GAPs) which increase the GTP hydrolysis activity. Inhibited by GDP dissociation inhibitors (GDIs). Functionally, the small GTPases Rab are key regulators of intracellular membrane trafficking, from the formation of transport vesicles to their fusion with membranes. Rabs cycle between an inactive GDP-bound form and an active GTP-bound form that is able to recruit to membranes different sets of downstream effectors directly responsible for vesicle formation, movement, tethering and fusion. RAB4A is involved in protein transport. Also plays a role in vesicular traffic. Mediates VEGFR2 endosomal trafficking to enhance VEGFR2 signaling. Acts as a regulator of platelet alpha-granule release during activation and aggregation of platelets. This chain is Ras-related protein Rab-4A, found in Rattus norvegicus (Rat).